Consider the following 467-residue polypeptide: Ribosome biogenesis protein YTM1 (467 aa).

The segment at 8–95 (IKIKFFTNEE…ETFLSLEYTR (88 aa)) is ubiquitin-like (UBL) domain. Positions 105-467 (SFNNEDWISS…QINKGSDISK (363 aa)) are sufficient for interaction with ERB1 and association with 66S pre-ribosomes. WD repeat units lie at residues 120-159 (KTLPSVTLSNMMISQPKILSGSYDGIVRTYNMSGNVEKQY), 161-199 (GHSGPIRAVKWVSPTRIVSAGNDRQVRLWKTSADDGSIP), 216-255 (GHKAPVVALAVENTSNRILSAGYDHSIGFWSTNYKEMTTI), 293-333 (SHTQ…CIDT), 335-374 (STGYSLLSIVQLPKSKLLATGSSARHINLHDPRISNNTTE), 382-422 (GHTN…SLYT), and 432-467 (KGADKVFAVSWDNEIGIISGGQDKKIQINKGSDISK).

This sequence belongs to the WD repeat WDR12/YTM1 family. In terms of assembly, component of the NOP7 complex, composed of ERB1, NOP7 and YTM1. The complex is held together by ERB1, which interacts with NOP7 via its N-terminal domain and with YTM1 via a high-affinity interaction between the seven-bladed beta-propeller domains of the 2 proteins. The NOP7 complex associates with the 66S pre-ribosome. Interacts (via UBL domain) with MDN1 (via VWFA/MIDAS domain).

The protein resides in the nucleus. The protein localises to the nucleolus. It localises to the nucleoplasm. In terms of biological role, component of the NOP7 complex, which is required for maturation of the 25S and 5.8S ribosomal RNAs and formation of the 60S ribosome. The polypeptide is Ribosome biogenesis protein YTM1 (Scheffersomyces stipitis (strain ATCC 58785 / CBS 6054 / NBRC 10063 / NRRL Y-11545) (Yeast)).